A 98-amino-acid chain; its full sequence is Citrate lyase acyl carrier protein (98 aa).

Serine 14 carries the O-(phosphoribosyl dephospho-coenzyme A)serine modification.

It belongs to the CitD family. As to quaternary structure, oligomer with a subunit composition of (alpha,beta,gamma)6.

It is found in the cytoplasm. Functionally, covalent carrier of the coenzyme of citrate lyase. This is Citrate lyase acyl carrier protein from Shigella boydii serotype 18 (strain CDC 3083-94 / BS512).